Here is a 193-residue protein sequence, read N- to C-terminus: Flagellar transcriptional regulator FlhC (193 aa).

Zn(2+) contacts are provided by Cys137, Cys140, Cys158, and Cys161.

The protein belongs to the FlhC family. In terms of assembly, heterohexamer composed of two FlhC and four FlhD subunits. Each FlhC binds a FlhD dimer, forming a heterotrimer, and a hexamer assembles by dimerization of two heterotrimers. Requires Zn(2+) as cofactor.

Its subcellular location is the cytoplasm. Functions in complex with FlhD as a master transcriptional regulator that regulates transcription of several flagellar and non-flagellar operons by binding to their promoter region. Activates expression of class 2 flagellar genes, including fliA, which is a flagellum-specific sigma factor that turns on the class 3 genes. Also regulates genes whose products function in a variety of physiological pathways. This is Flagellar transcriptional regulator FlhC from Pectobacterium carotovorum (Erwinia carotovora).